A 61-amino-acid polypeptide reads, in one-letter code: Cytotoxin homolog 3 (61 aa).

4 disulfide bridges follow: Cys3–Cys22, Cys15–Cys39, Cys43–Cys54, and Cys55–Cys60.

Belongs to the three-finger toxin family. Short-chain subfamily. Orphan group XV sub-subfamily. In terms of tissue distribution, expressed by the venom gland.

Its subcellular location is the secreted. The protein resides in the target cell membrane. Has low cytotoxic activity. In Naja melanoleuca (Forest cobra), this protein is Cytotoxin homolog 3.